Reading from the N-terminus, the 361-residue chain is Palmitoyltransferase ZDHHC16 (361 aa).

Topologically, residues 1 to 77 (MRGQRSLLLG…VYWLVDNVIR (77 aa)) are cytoplasmic. The chain crosses the membrane as a helical span at residues 78–98 (WFGVVFVVLVIVLTGSIVAIA). Topologically, residues 99–116 (YLCVLPLILRTYSVPRLC) are lumenal. The helical transmembrane segment at 117–137 (WHFFYSHWNLILIVFHYYQAI) threads the bilayer. Residues 138–198 (TTPPGYPPQG…NNCVGHYNHR (61 aa)) are Cytoplasmic-facing. Positions 155–205 (SICKKCIYPKPARTHHCSICNRCVLKMDHHCPWLNNCVGHYNHRYFFSFCF) constitute a DHHC domain. Cysteine 185 functions as the S-palmitoyl cysteine intermediate in the catalytic mechanism. A helical membrane pass occupies residues 199-219 (YFFSFCFFMTLGCVYCSYGSW). Topologically, residues 220–250 (DLFREAYAAIETYHQTPPPTFSFRERITHKS) are lumenal. Residues 251-271 (LVYLWFLCSSVALALGALTMW) traverse the membrane as a helical segment. At 272 to 361 (HAVLISRGET…TAHSASVMAV (90 aa)) the chain is on the cytoplasmic side.

The protein belongs to the DHHC palmitoyltransferase family. In terms of assembly, interacts with ABL1. Interacts with COPS5. As to expression, ubiquitously expressed.

The protein localises to the endoplasmic reticulum membrane. It carries out the reaction L-cysteinyl-[protein] + hexadecanoyl-CoA = S-hexadecanoyl-L-cysteinyl-[protein] + CoA. Palmitoyl acyltransferase that mediates palmitoylation of proteins such as PLN and ZDHHC6. Required during embryonic heart development and cardiac function, possibly by mediating palmitoylation of PLN, thereby affecting PLN phosphorylation and homooligomerization. Also required for eye development. Palmitoylates ZDHHC6, affecting the quaternary assembly of ZDHHC6, its localization, stability and function. May play a role in DNA damage response. May be involved in apoptosis regulation. Involved in the proliferation of neural stem cells by regulating the FGF/ERK pathway. The chain is Palmitoyltransferase ZDHHC16 from Mus musculus (Mouse).